Consider the following 182-residue polypeptide: Flavodoxin (182 aa).

The Flavodoxin-like domain maps to 4–173 (IGLFFGSDTG…RLKGWLSLIA (170 aa)).

This sequence belongs to the flavodoxin family. FMN serves as cofactor.

In terms of biological role, low-potential electron donor to a number of redox enzymes. NifF is the electron donor to nitrogenase. The protein is Flavodoxin (nifF) of Rhodobacter capsulatus (strain ATCC BAA-309 / NBRC 16581 / SB1003).